The primary structure comprises 423 residues: Glutamyl-tRNA reductase (423 aa).

Substrate-binding positions include 49 to 52 (TCNR), Ser-109, 114 to 116 (EGQ), and Gln-120. Cys-50 functions as the Nucleophile in the catalytic mechanism. 189–194 (GAGETG) provides a ligand contact to NADP(+).

The protein belongs to the glutamyl-tRNA reductase family. As to quaternary structure, homodimer.

The catalysed reaction is (S)-4-amino-5-oxopentanoate + tRNA(Glu) + NADP(+) = L-glutamyl-tRNA(Glu) + NADPH + H(+). Its pathway is porphyrin-containing compound metabolism; protoporphyrin-IX biosynthesis; 5-aminolevulinate from L-glutamyl-tRNA(Glu): step 1/2. The protein operates within porphyrin-containing compound metabolism; chlorophyll biosynthesis. Its function is as follows. Catalyzes the NADPH-dependent reduction of glutamyl-tRNA(Glu) to glutamate 1-semialdehyde (GSA). The protein is Glutamyl-tRNA reductase of Chlorobium limicola (strain DSM 245 / NBRC 103803 / 6330).